Consider the following 589-residue polypeptide: Carbonic anhydrase (589 aa).

2 Alpha-carbonic anhydrase domains span residues 59 to 316 (HDYN…YEYK) and 321 to 585 (DKYN…YGYN). Residue 258-259 (TT) participates in substrate binding. The tract at residues 390–589 (MQINFGDPPA…TVYGYNGAAA (200 aa)) is catalytic. 3 residues coordinate Zn(2+): His420, His422, and His440.

Belongs to the alpha-carbonic anhydrase family. Zn(2+) serves as cofactor.

The catalysed reaction is hydrogencarbonate + H(+) = CO2 + H2O. Functionally, reversible hydration of carbon dioxide. This chain is Carbonic anhydrase (DCA), found in Dunaliella salina (Green alga).